The following is a 199-amino-acid chain: Small ribosomal subunit protein eS1 (199 aa).

It belongs to the eukaryotic ribosomal protein eS1 family.

This is Small ribosomal subunit protein eS1 from Pyrococcus abyssi (strain GE5 / Orsay).